A 78-amino-acid polypeptide reads, in one-letter code: D-alanyl carrier protein (78 aa).

Positions 1–77 (MDLKEQIVEI…KVVAKVESLI (77 aa)) constitute a Carrier domain. Position 35 is an O-(pantetheine 4'-phosphoryl)serine (Ser-35).

This sequence belongs to the DltC family. Post-translationally, 4'-phosphopantetheine is transferred from CoA to a specific serine of apo-DCP.

The protein localises to the cytoplasm. It functions in the pathway cell wall biogenesis; lipoteichoic acid biosynthesis. Its function is as follows. Carrier protein involved in the D-alanylation of lipoteichoic acid (LTA). The loading of thioester-linked D-alanine onto DltC is catalyzed by D-alanine--D-alanyl carrier protein ligase DltA. The DltC-carried D-alanyl group is further transferred to cell membrane phosphatidylglycerol (PG) by forming an ester bond, probably catalyzed by DltD. D-alanylation of LTA plays an important role in modulating the properties of the cell wall in Gram-positive bacteria, influencing the net charge of the cell wall. The polypeptide is D-alanyl carrier protein (Leuconostoc mesenteroides subsp. mesenteroides (strain ATCC 8293 / DSM 20343 / BCRC 11652 / CCM 1803 / JCM 6124 / NCDO 523 / NBRC 100496 / NCIMB 8023 / NCTC 12954 / NRRL B-1118 / 37Y)).